The chain runs to 891 residues: Mating-type protein A-alpha Y1 (891 aa).

The homeobox DNA-binding region spans 146 to 205 (SKKPRPKFHSEYTPLLELYFRFNAYPTYADRRVLAEKTGMLTRQITVWFQNHRRRAKGPL). Disordered stretches follow at residues 241–291 (PITL…PSTL), 319–339 (DIEM…LPKG), 393–437 (TRKP…RRVS), 610–718 (ARRK…EQSL), and 800–822 (MNWT…GGDE). The segment covering 244–257 (LGNNKTPDLTTSSR) has biased composition (polar residues). Over residues 328-337 (PKRRKMKKLP) the composition is skewed to basic residues. Residues 427-437 (ASSTVPSRRVS) show a composition bias toward low complexity. Basic residues predominate over residues 627–638 (KKDKKERKKAGL). Composition is skewed to low complexity over residues 651–667 (VSSR…TSAR) and 676–710 (QPSS…SMPS). Residues 800 to 818 (MNWTASVGSNAQDPASQES) are compositionally biased toward polar residues.

It localises to the nucleus. Specifies A-alpha-1 mating-type. May regulate the expression of genes specific to the homokaryotic cell type. This Schizophyllum commune (Split gill fungus) protein is Mating-type protein A-alpha Y1.